The chain runs to 360 residues: UDP-N-acetylglucosamine--N-acetylmuramyl-(pentapeptide) pyrophosphoryl-undecaprenol N-acetylglucosamine transferase (360 aa).

UDP-N-acetyl-alpha-D-glucosamine contacts are provided by residues 12-14 (TGG), Asn124, Arg161, Ser189, Ile243, and Gln288.

It belongs to the glycosyltransferase 28 family. MurG subfamily.

Its subcellular location is the cell inner membrane. It carries out the reaction di-trans,octa-cis-undecaprenyl diphospho-N-acetyl-alpha-D-muramoyl-L-alanyl-D-glutamyl-meso-2,6-diaminopimeloyl-D-alanyl-D-alanine + UDP-N-acetyl-alpha-D-glucosamine = di-trans,octa-cis-undecaprenyl diphospho-[N-acetyl-alpha-D-glucosaminyl-(1-&gt;4)]-N-acetyl-alpha-D-muramoyl-L-alanyl-D-glutamyl-meso-2,6-diaminopimeloyl-D-alanyl-D-alanine + UDP + H(+). The protein operates within cell wall biogenesis; peptidoglycan biosynthesis. Its function is as follows. Cell wall formation. Catalyzes the transfer of a GlcNAc subunit on undecaprenyl-pyrophosphoryl-MurNAc-pentapeptide (lipid intermediate I) to form undecaprenyl-pyrophosphoryl-MurNAc-(pentapeptide)GlcNAc (lipid intermediate II). This Acidithiobacillus ferrooxidans (strain ATCC 23270 / DSM 14882 / CIP 104768 / NCIMB 8455) (Ferrobacillus ferrooxidans (strain ATCC 23270)) protein is UDP-N-acetylglucosamine--N-acetylmuramyl-(pentapeptide) pyrophosphoryl-undecaprenol N-acetylglucosamine transferase.